The primary structure comprises 246 residues: tRNA pseudouridine synthase A (246 aa).

The active-site Nucleophile is the Asp52. Position 111 (Tyr111) interacts with substrate.

This sequence belongs to the tRNA pseudouridine synthase TruA family. As to quaternary structure, homodimer.

It catalyses the reaction uridine(38/39/40) in tRNA = pseudouridine(38/39/40) in tRNA. In terms of biological role, formation of pseudouridine at positions 38, 39 and 40 in the anticodon stem and loop of transfer RNAs. In Borreliella burgdorferi (strain ATCC 35210 / DSM 4680 / CIP 102532 / B31) (Borrelia burgdorferi), this protein is tRNA pseudouridine synthase A.